A 78-amino-acid polypeptide reads, in one-letter code: Putative defensin-like protein 202 (78 aa).

An N-terminal signal peptide occupies residues 1–29 (MAKTQNFVCFTAVLLILILVSTEIPMIEG). Disulfide bonds link C44–C65, C49–C74, and C53–C76.

This sequence belongs to the DEFL family.

It localises to the secreted. The chain is Putative defensin-like protein 202 from Arabidopsis thaliana (Mouse-ear cress).